We begin with the raw amino-acid sequence, 381 residues long: Lipid-A-disaccharide synthase (381 aa).

Belongs to the LpxB family.

It carries out the reaction a lipid X + a UDP-2-N,3-O-bis[(3R)-3-hydroxyacyl]-alpha-D-glucosamine = a lipid A disaccharide + UDP + H(+). The protein operates within bacterial outer membrane biogenesis; LPS lipid A biosynthesis. Its function is as follows. Condensation of UDP-2,3-diacylglucosamine and 2,3-diacylglucosamine-1-phosphate to form lipid A disaccharide, a precursor of lipid A, a phosphorylated glycolipid that anchors the lipopolysaccharide to the outer membrane of the cell. The sequence is that of Lipid-A-disaccharide synthase from Rickettsia bellii (strain OSU 85-389).